The sequence spans 446 residues: Phosphoglucosamine mutase (446 aa).

The active-site Phosphoserine intermediate is the Ser99. 4 residues coordinate Mg(2+): Ser99, Asp242, Asp244, and Asp246. Ser99 carries the post-translational modification Phosphoserine.

Belongs to the phosphohexose mutase family. Requires Mg(2+) as cofactor. Post-translationally, activated by phosphorylation.

The enzyme catalyses alpha-D-glucosamine 1-phosphate = D-glucosamine 6-phosphate. Its function is as follows. Catalyzes the conversion of glucosamine-6-phosphate to glucosamine-1-phosphate. This chain is Phosphoglucosamine mutase, found in Campylobacter fetus subsp. fetus (strain 82-40).